The chain runs to 978 residues: Xylanolytic transcriptional activator xlnR (978 aa).

2 disordered regions span residues 1–39 (MSTT…LAEG) and 53–116 (AAAG…RDPL). The segment covering 18–32 (SGLSSNRMAQSQTPG) has biased composition (polar residues). Over residues 53 to 69 (AAAGDTTATAASGPSDP) the composition is skewed to low complexity. A compositionally biased stretch (basic and acidic residues) spans 71–82 (SKSKDPYDFDHH). Residues 83-93 (NHNHHNHHNNN) show a composition bias toward basic residues. Residues 94–103 (HHPNSNSNNS) show a composition bias toward low complexity. The zn(2)-C6 fungal-type DNA-binding region spans 140-166 (CDQCNQLRTRCDGQNPCAHCIEFGLTC). 3 disordered regions span residues 179-223 (SKKD…ELNG), 238-293 (SAQP…PIPV), and 588-629 (ELPP…PGNT). Over residues 184-193 (AAAAAAATAT) the composition is skewed to low complexity. The span at 214 to 223 (PPDRRQELNG) shows a compositional bias: basic and acidic residues.

Belongs to the xlnR/xlr1 family.

Its subcellular location is the nucleus. Its function is as follows. Transcriptional activator of the xylanolytic system. Involved in the regulation of extracellular cellulolytic and xylanolytic genes and in the regulation of the intracellular activities of D-xylose catabolic genes in the pentose catabolic pathway (PCP) in response to the presence of D-xylose. The polypeptide is Xylanolytic transcriptional activator xlnR (xlnR) (Aspergillus clavatus (strain ATCC 1007 / CBS 513.65 / DSM 816 / NCTC 3887 / NRRL 1 / QM 1276 / 107)).